We begin with the raw amino-acid sequence, 341 residues long: Phosphoribosylformylglycinamidine cyclo-ligase (341 aa).

The protein belongs to the AIR synthase family.

The protein resides in the cytoplasm. It catalyses the reaction 2-formamido-N(1)-(5-O-phospho-beta-D-ribosyl)acetamidine + ATP = 5-amino-1-(5-phospho-beta-D-ribosyl)imidazole + ADP + phosphate + H(+). Its pathway is purine metabolism; IMP biosynthesis via de novo pathway; 5-amino-1-(5-phospho-D-ribosyl)imidazole from N(2)-formyl-N(1)-(5-phospho-D-ribosyl)glycinamide: step 2/2. This Lachnospira eligens (strain ATCC 27750 / DSM 3376 / VPI C15-48 / C15-B4) (Eubacterium eligens) protein is Phosphoribosylformylglycinamidine cyclo-ligase.